A 333-amino-acid chain; its full sequence is MKSILEQLSSMTVVVADTGDLDSIKKFQPRDATTNPSLILAAAKNPDYVKLIDKSLESSENALPQGFTEIDLIKETVDQVSVFFGKEILKIISGRVSTEVDARLSFDTQATVEKARKLINLYKNFGIEKERILIKIAATWEGIKAAEILEKEGIKCNLTLLFNFCQAVTCANAKITLISPFVGRILDWHKAKTGKTSFVGAEDPGVISVTQIYKYFKEKGFKTEVMGASFRNLDEIKELAGCDLLTIAPKFLEELKKEKGELVRKLDVSTQINHSIDYEFEEKDFRLSMLEDQMASEKLSEGITGFSKAIEELEELLLKRYSEIKNHKLISAN.

Residue Lys135 is the Schiff-base intermediate with substrate of the active site.

Belongs to the transaldolase family. Type 1 subfamily. As to quaternary structure, homodimer.

It localises to the cytoplasm. The catalysed reaction is D-sedoheptulose 7-phosphate + D-glyceraldehyde 3-phosphate = D-erythrose 4-phosphate + beta-D-fructose 6-phosphate. It functions in the pathway carbohydrate degradation; pentose phosphate pathway; D-glyceraldehyde 3-phosphate and beta-D-fructose 6-phosphate from D-ribose 5-phosphate and D-xylulose 5-phosphate (non-oxidative stage): step 2/3. Its function is as follows. Transaldolase is important for the balance of metabolites in the pentose-phosphate pathway. The chain is Transaldolase from Prochlorococcus marinus (strain MIT 9301).